Reading from the N-terminus, the 453-residue chain is Verruculogen prenyltransferase (453 aa).

Glutamate 89 contributes to the substrate binding site. Dimethylallyl diphosphate is bound by residues arginine 102, lysine 194, tyrosine 196, lysine 273, tyrosine 275, tyrosine 378, tyrosine 443, and tyrosine 447.

This sequence belongs to the tryptophan dimethylallyltransferase family.

It catalyses the reaction verruculogen + dimethylallyl diphosphate = fumitremorgin A + diphosphate. It participates in mycotoxin biosynthesis. Verruculogen prenyltransferase; part of the gene cluster that mediates the biosynthesis of fumitremorgins, indole alkaloids that carry not only intriguing chemical structures, but also interesting biological and pharmacological activities. The biosynthesis of fumitremorgin-type alkaloids begins by condensation of the two amino acids L-tryptophan and L-proline to brevianamide F, catalyzed by the non-ribosomal peptide synthetase ftmPS/ftmA. Brevianamide F is then prenylated by the prenyltransferase ftmPT1/ftmB in the presence of dimethylallyl diphosphate, resulting in the formation of tryprostatin B. The three cytochrome P450 monooxygenases, ftmP450-1/ftmC, ftmP450-2/ftmE and ftmP450-3/FtmG, are responsible for the conversion of tryprostatin B to 6-hydroxytryprostatin B, tryprostatin A to fumitremorgin C and fumitremorgin C to 12,13-dihydroxyfumitremorgin C, respectively. The putative methyltransferase ftmMT/ftmD is expected for the conversion of 6-hydroxytryprostatin B to tryprostatin A. FtmPT2/FtmH catalyzes the prenylation of 12,13-dihydroxyfumitre-morgin C in the presence of dimethylallyl diphosphate, resulting in the formation of fumitremorgin B. Fumitremorgin B is further converted to verruculogen by ftmOx1/ftmF via the insertion of an endoperoxide bond between the two prenyl moieties. Finally, verruculogen is further converted to fumitremorgin A by the verruculogen prenyltransferase ftmPT3. The sequence is that of Verruculogen prenyltransferase from Neosartorya fischeri (strain ATCC 1020 / DSM 3700 / CBS 544.65 / FGSC A1164 / JCM 1740 / NRRL 181 / WB 181) (Aspergillus fischerianus).